Consider the following 173-residue polypeptide: Crossover junction endodeoxyribonuclease RuvC (173 aa).

Active-site residues include D8, E67, and D139. Positions 8, 67, and 139 each coordinate Mg(2+).

It belongs to the RuvC family. As to quaternary structure, homodimer which binds Holliday junction (HJ) DNA. The HJ becomes 2-fold symmetrical on binding to RuvC with unstacked arms; it has a different conformation from HJ DNA in complex with RuvA. In the full resolvosome a probable DNA-RuvA(4)-RuvB(12)-RuvC(2) complex forms which resolves the HJ. Mg(2+) is required as a cofactor.

The protein localises to the cytoplasm. It carries out the reaction Endonucleolytic cleavage at a junction such as a reciprocal single-stranded crossover between two homologous DNA duplexes (Holliday junction).. Its function is as follows. The RuvA-RuvB-RuvC complex processes Holliday junction (HJ) DNA during genetic recombination and DNA repair. Endonuclease that resolves HJ intermediates. Cleaves cruciform DNA by making single-stranded nicks across the HJ at symmetrical positions within the homologous arms, yielding a 5'-phosphate and a 3'-hydroxyl group; requires a central core of homology in the junction. The consensus cleavage sequence is 5'-(A/T)TT(C/G)-3'. Cleavage occurs on the 3'-side of the TT dinucleotide at the point of strand exchange. HJ branch migration catalyzed by RuvA-RuvB allows RuvC to scan DNA until it finds its consensus sequence, where it cleaves and resolves the cruciform DNA. This is Crossover junction endodeoxyribonuclease RuvC from Shewanella sp. (strain MR-4).